A 249-amino-acid chain; its full sequence is UPF0758 protein BMEI0718 (249 aa).

Positions 1–34 (MAKKKDTPGDGEFPGFSDTLQRTPKLEKPHYAGH) are disordered. Positions 24 to 34 (PKLEKPHYAGH) are enriched in basic and acidic residues. An MPN domain is found at 127–249 (VLGSWDKVIN…HASLRSLRLI (123 aa)). 3 residues coordinate Zn(2+): His-198, His-200, and Asp-211. Positions 198-211 (HNHPSGDPTPSRAD) match the JAMM motif motif.

The protein belongs to the UPF0758 family.

The protein is UPF0758 protein BMEI0718 of Brucella melitensis biotype 1 (strain ATCC 23456 / CCUG 17765 / NCTC 10094 / 16M).